A 47-amino-acid polypeptide reads, in one-letter code: Conotoxin Cal6.18 (47 aa).

The signal sequence occupies residues 1–19 (MKLTYVLIVAMLVLVVCRA).

The protein belongs to the conotoxin O1 superfamily. In terms of processing, may contain 3 disulfide bonds. As to expression, expressed by the venom duct.

It is found in the secreted. Probable neurotoxin. In Californiconus californicus (California cone), this protein is Conotoxin Cal6.18.